Here is a 590-residue protein sequence, read N- to C-terminus: Leukocyte immunoglobulin-like receptor subfamily B member 5 (590 aa).

The N-terminal stretch at 1 to 23 (MTLTLSVLICLGLSVGPRTCVQA) is a signal peptide. Over 24–458 (GTLPKPTLWA…PQSGLGRHLG (435 aa)) the chain is Extracellular. 4 consecutive Ig-like C2-type domains span residues 27–116 (PKPT…LELV), 111–228 (DPLE…SLLI), 224–313 (PSLL…DPLD), and 337–418 (GENV…LVVS). A disulfide bridge links Cys-49 with Cys-98. Asn-139 is a glycosylation site (N-linked (GlcNAc...) asparagine). 2 cysteine pairs are disulfide-bonded: Cys-144/Cys-195 and Cys-244/Cys-295. N-linked (GlcNAc...) asparagine glycosylation is found at Asn-279 and Asn-339. An intrachain disulfide couples Cys-344 to Cys-395. A compositionally biased stretch (low complexity) spans 416–433 (VVSGPSGDPSLSPTGSTP). Residues 416–449 (VVSGPSGDPSLSPTGSTPTPGPEDQPLTPTGLDP) form a disordered region. Residues 459–479 (VVTGVSVAFVLLLFLLLFLLL) form a helical membrane-spanning segment. Residues 480 to 590 (RHRHQSKHRT…PSIYAPLAIH (111 aa)) lie on the Cytoplasmic side of the membrane. Disordered regions lie at residues 488 to 514 (RTSA…KRAS) and 529 to 550 (KDTQ…EAPQ). Ser-514 is subject to Phosphoserine. Residues 552-557 (VTYAQL) carry the ITIM motif 1 motif. Over residues 562 to 578 (LRREATEPPPSQEREPP) the composition is skewed to basic and acidic residues. The disordered stretch occupies residues 562–590 (LRREATEPPPSQEREPPAEPSIYAPLAIH). Residues 582-587 (SIYAPL) carry the ITIM motif 2 motif.

As to expression, detected in a natural killer (NK) cells.

Its subcellular location is the membrane. In terms of biological role, may act as receptor for class I MHC antigens. The chain is Leukocyte immunoglobulin-like receptor subfamily B member 5 (LILRB5) from Homo sapiens (Human).